The following is a 457-amino-acid chain: Multidrug resistance protein MdtK (457 aa).

12 consecutive transmembrane segments (helical) span residues 11 to 31 (LLAL…MGFV), 53 to 73 (IWLP…PVIA), 93 to 113 (WLAG…GYII), 127 to 147 (AVGY…FQVA), 160 to 180 (GMVM…IFIY), 189 to 209 (GGVG…LAMV), 243 to 263 (LPIA…ALLV), 276 to 296 (IALN…AAVT), 314 to 334 (AART…IFTV), 350 to 370 (VVTL…SDSI), 387 to 407 (IFYI…YILA), and 418 to 438 (PAGF…MMML).

This sequence belongs to the multi antimicrobial extrusion (MATE) (TC 2.A.66.1) family. MdtK subfamily.

Its subcellular location is the cell inner membrane. Multidrug efflux pump that functions probably as a Na(+)/drug antiporter. The polypeptide is Multidrug resistance protein MdtK (Escherichia coli O17:K52:H18 (strain UMN026 / ExPEC)).